A 255-amino-acid polypeptide reads, in one-letter code: tRNA (guanine-N(1)-)-methyltransferase (255 aa).

Residues G113 and 133–138 (IGDYVL) each bind S-adenosyl-L-methionine.

The protein belongs to the RNA methyltransferase TrmD family. Homodimer.

The protein localises to the cytoplasm. The catalysed reaction is guanosine(37) in tRNA + S-adenosyl-L-methionine = N(1)-methylguanosine(37) in tRNA + S-adenosyl-L-homocysteine + H(+). Its function is as follows. Specifically methylates guanosine-37 in various tRNAs. The chain is tRNA (guanine-N(1)-)-methyltransferase from Escherichia coli O6:K15:H31 (strain 536 / UPEC).